Consider the following 555-residue polypeptide: O-fucosyltransferase 20 (555 aa).

Residues 1–58 (MALPKNGGNSSSTKKKVSYISVPSQIINSLSSSSLQSLLVSPKKSSRCTNRFSYRNPR) lie on the Cytoplasmic side of the membrane. The chain crosses the membrane as a helical; Signal-anchor for type II membrane protein span at residues 59–79 (IWFLTLFLVSLFGMLKLGLNV). The Lumenal portion of the chain corresponds to 80 to 555 (DPISLPFSRY…MCSDRRQQQQ (476 aa)). Residues 110 to 130 (KNDTQSSSSSEHRKNETLPTE) are disordered. N-linked (GlcNAc...) asparagine glycosylation is found at N111 and N124. Position 330 to 332 (330 to 332 (HLR)) interacts with substrate. N371 and N503 each carry an N-linked (GlcNAc...) asparagine glycan. A disordered region spans residues 525-555 (QPELRTGRGGKDVTKHPVSECMCSDRRQQQQ). Residues 529–555 (RTGRGGKDVTKHPVSECMCSDRRQQQQ) show a composition bias toward basic and acidic residues.

It belongs to the glycosyltransferase GT106 family. As to expression, highly expressed in embryogenic microspore and in vegetative tissues.

Its subcellular location is the golgi apparatus membrane. The protein operates within glycan metabolism. May play a role in the biosynthesis of matrix polysaccharides and contribute to the biomechanics and development of the plant cell wall. The protein is O-fucosyltransferase 20 of Brassica napus (Rape).